Reading from the N-terminus, the 69-residue chain is uncharacterized protein (69 aa).

This is an uncharacterized protein from Mycobacterium bovis (strain ATCC BAA-935 / AF2122/97).